A 145-amino-acid polypeptide reads, in one-letter code: Large ribosomal subunit protein uL16 (145 aa).

It belongs to the universal ribosomal protein uL16 family. As to quaternary structure, part of the 50S ribosomal subunit.

Its function is as follows. Binds 23S rRNA and is also seen to make contacts with the A and possibly P site tRNAs. The protein is Large ribosomal subunit protein uL16 of Agathobacter rectalis (strain ATCC 33656 / DSM 3377 / JCM 17463 / KCTC 5835 / VPI 0990) (Eubacterium rectale).